The chain runs to 333 residues: DNA-directed RNA polymerase subunit alpha (333 aa).

The segment at 1–233 (MVREKVRVST…DLFIPFLHAE (233 aa)) is alpha N-terminal domain (alpha-NTD). The tract at residues 266–333 (KKEIAFKSIF…DILEIEKHFP (68 aa)) is alpha C-terminal domain (alpha-CTD).

It belongs to the RNA polymerase alpha chain family. In plastids the minimal PEP RNA polymerase catalytic core is composed of four subunits: alpha, beta, beta', and beta''. When a (nuclear-encoded) sigma factor is associated with the core the holoenzyme is formed, which can initiate transcription.

The protein localises to the plastid. It is found in the chloroplast. The catalysed reaction is RNA(n) + a ribonucleoside 5'-triphosphate = RNA(n+1) + diphosphate. Its function is as follows. DNA-dependent RNA polymerase catalyzes the transcription of DNA into RNA using the four ribonucleoside triphosphates as substrates. This Lotus japonicus (Lotus corniculatus var. japonicus) protein is DNA-directed RNA polymerase subunit alpha.